We begin with the raw amino-acid sequence, 124 residues long: Protein MGF 110-4L (124 aa).

A signal peptide spans 1 to 28 (MLVIFLGILGLLANQVLGLPIQAGGHLC). Asparagine 64 carries N-linked (GlcNAc...) asparagine; by host glycosylation. Residues 121 to 124 (KEDL) carry the Prevents secretion from ER motif.

Belongs to the asfivirus MGF 110 family.

Its subcellular location is the virion. It is found in the host endoplasmic reticulum-Golgi intermediate compartment. Its function is as follows. Causes the redistribution of lumenal ER protein to an enlarged ERGIC compartment. This chain is Protein MGF 110-4L, found in Ornithodoros (relapsing fever ticks).